The following is a 388-amino-acid chain: Succinate--CoA ligase [ADP-forming] subunit beta (388 aa).

Positions 9–244 (KQLFARYGMP…LSQEDERESR (236 aa)) constitute an ATP-grasp domain. ATP-binding positions include K46, 53 to 55 (GRG), E99, T102, and E107. N199 and D213 together coordinate Mg(2+). Substrate-binding positions include N264 and 321–323 (GIV).

It belongs to the succinate/malate CoA ligase beta subunit family. Heterotetramer of two alpha and two beta subunits. Requires Mg(2+) as cofactor.

The catalysed reaction is succinate + ATP + CoA = succinyl-CoA + ADP + phosphate. It catalyses the reaction GTP + succinate + CoA = succinyl-CoA + GDP + phosphate. It functions in the pathway carbohydrate metabolism; tricarboxylic acid cycle; succinate from succinyl-CoA (ligase route): step 1/1. In terms of biological role, succinyl-CoA synthetase functions in the citric acid cycle (TCA), coupling the hydrolysis of succinyl-CoA to the synthesis of either ATP or GTP and thus represents the only step of substrate-level phosphorylation in the TCA. The beta subunit provides nucleotide specificity of the enzyme and binds the substrate succinate, while the binding sites for coenzyme A and phosphate are found in the alpha subunit. This Serratia proteamaculans (strain 568) protein is Succinate--CoA ligase [ADP-forming] subunit beta.